We begin with the raw amino-acid sequence, 671 residues long: Phenol 2-monooxygenase (671 aa).

FAD is bound by residues Asp10–Asp43 and Leu295–Asp305.

Belongs to the PheA/TfdB FAD monooxygenase family. Requires FAD as cofactor.

Its subcellular location is the cytoplasm. It carries out the reaction phenol + NADPH + O2 + H(+) = catechol + NADP(+) + H2O. Its pathway is aromatic compound metabolism; phenol degradation. Its function is as follows. Hydroxylates phenol to catechol. Also acts on cresols. This is Phenol 2-monooxygenase (tbuD) from Ralstonia pickettii (Burkholderia pickettii).